The chain runs to 270 residues: Phosphatidylglycerol--prolipoprotein diacylglyceryl transferase (270 aa).

7 helical membrane-spanning segments follow: residues Val14 to Phe34, Leu60 to Tyr80, Val95 to Ile115, Ala128 to Ile148, Ser176 to Ile196, Ile202 to Phe222, and Ile238 to Val258. Arg143 is an a 1,2-diacyl-sn-glycero-3-phospho-(1'-sn-glycerol) binding site.

This sequence belongs to the Lgt family.

The protein resides in the cell inner membrane. The enzyme catalyses L-cysteinyl-[prolipoprotein] + a 1,2-diacyl-sn-glycero-3-phospho-(1'-sn-glycerol) = an S-1,2-diacyl-sn-glyceryl-L-cysteinyl-[prolipoprotein] + sn-glycerol 1-phosphate + H(+). Its pathway is protein modification; lipoprotein biosynthesis (diacylglyceryl transfer). Its function is as follows. Catalyzes the transfer of the diacylglyceryl group from phosphatidylglycerol to the sulfhydryl group of the N-terminal cysteine of a prolipoprotein, the first step in the formation of mature lipoproteins. The sequence is that of Phosphatidylglycerol--prolipoprotein diacylglyceryl transferase from Pasteurella multocida (strain Pm70).